The following is a 185-amino-acid chain: Elongation factor P (185 aa).

The protein belongs to the elongation factor P family.

It is found in the cytoplasm. It participates in protein biosynthesis; polypeptide chain elongation. Its function is as follows. Involved in peptide bond synthesis. Stimulates efficient translation and peptide-bond synthesis on native or reconstituted 70S ribosomes in vitro. Probably functions indirectly by altering the affinity of the ribosome for aminoacyl-tRNA, thus increasing their reactivity as acceptors for peptidyl transferase. This is Elongation factor P from Geobacillus kaustophilus (strain HTA426).